Reading from the N-terminus, the 759-residue chain is Short transient receptor potential channel 1 (759 aa).

The disordered stretch occupies residues 1 to 30 (MMAALYPSTDLSGVSSSSLPSSPSSSSPNE). At 1–311 (MMAALYPSTD…FGQMSGYRRK (311 aa)) the chain is on the cytoplasmic side. Residues 15-28 (SSSSLPSSPSSSSP) show a composition bias toward low complexity. ANK repeat units follow at residues 46 to 75 (LNEKLFLLACDKGDYYMVKKILEENSSGDL), 83 to 109 (LGRNAVTITIENESLDILQLLLDYGCQ), and 124 to 146 (MDVAPVILAAHRNNYEILTMLLK). His155, Cys159, Cys161, and Cys164 together coordinate Zn(2+). Residues 312–345 (PTCKKIMTVLTVGIFWPVLSLCYLIAPKSQFGRI) constitute an intramembrane region (discontinuously helical). The Cytoplasmic segment spans residues 346–352 (IHTPFMK). The chain crosses the membrane as a helical span at residues 353–370 (FIIHGASYFTFLLLLNLY). At 371-388 (SLVYNEDKKNTMGPALER) the chain is on the extracellular side. A helical transmembrane segment spans residues 389-405 (IDYLLILWIIGMIWSDI). Topologically, residues 406–421 (KRLWYEGLEDFLEESR) are cytoplasmic. Residues 422–441 (NQLSFVMNSLYLATFALKVV) traverse the membrane as a helical segment. Residues 442–462 (AHNKFHDFADRKDWDAFHPTL) lie on the Extracellular side of the membrane. A helical membrane pass occupies residues 463-483 (VAEGLFAFANVLSYLRLFFMY). At 484–502 (TTSSILGPLQISMGQMLQD) the chain is on the cytoplasmic side. The chain crosses the membrane as a helical span at residues 503–524 (FGKFLGMFLLVLFSFTIGLTQL). Residues 525–589 (YDKGYTSKEQ…GEELQSFVGA (65 aa)) lie on the Extracellular side of the membrane. Cys537 and Cys542 are joined by a disulfide. The chain crosses the membrane as a helical span at residues 590-610 (VIVGTYNVVVVIVLTKLLVAM). The Cytoplasmic portion of the chain corresponds to 611-759 (LHKSFQLIAN…SKYAMFYPKN (149 aa)).

It belongs to the transient receptor (TC 1.A.4) family. STrpC subfamily. TRPC1 sub-subfamily. In terms of assembly, heterotetramer with TRPC4 and/or TRPC5. Forms a heteromeric ion channel with TRPC4, with a 1:3 TRPC1:TRPC4 stoichiometry. Unlike other TRP channel proteins, does not form a homomeric channel. Interacts with TRPC4AP. Interacts with ITPR3. Interacts with MX1 and RNF24. Interacts with FKBP4. Interacts with PLSCR1. Interacts with PKD2L2. Forms a heterotetramer with PKD2 with a 2:2 stoichiometry; has distinct channel properties separate from PKD2 or TRPC1 homomers alone. Post-translationally, activation of PRKCA induces phosphorylation of TRPC1 and subsequent Ca2+ entry into cells. Expressed in brain, hippocampus, amygdala, Purkinje cells and single neurons in the cortex and striatum.

The protein localises to the cell membrane. It carries out the reaction Ca(2+)(in) = Ca(2+)(out). It catalyses the reaction Na(+)(in) = Na(+)(out). The enzyme catalyses Li(+)(in) = Li(+)(out). The catalysed reaction is Cs(+)(in) = Cs(+)(out). May be operated by a phosphatidylinositol second messenger system activated by receptor tyrosine kinases or G-protein coupled receptors. Also activated by intracellular calcium store depletion. Its function is as follows. Forms a receptor-activated non-selective calcium permeant cation channel. Forms a heteromeric ion channel with TRPC4 or TRPC5 that has reduced calcium permeability compared to the homomeric TRPC4 or TRPC5 channel. Also permeable to monovalent ions including sodium, lithium and cesium ions. This chain is Short transient receptor potential channel 1 (Trpc1), found in Rattus norvegicus (Rat).